The sequence spans 107 residues: V-type proton ATPase subunit G (107 aa).

This sequence belongs to the V-ATPase G subunit family. In terms of assembly, V-ATPase is a heteromultimeric enzyme composed of a peripheral catalytic V1 complex (components A to H) attached to an integral membrane V0 proton pore complex (components: a, c, c', c'' and d).

In terms of biological role, catalytic subunit of the peripheral V1 complex of vacuolar ATPase (V-ATPase). V-ATPase is responsible for acidifying a variety of intracellular compartments in eukaryotic cells. The polypeptide is V-type proton ATPase subunit G (atp6v1g) (Dictyostelium discoideum (Social amoeba)).